We begin with the raw amino-acid sequence, 66 residues long: Conotoxin Cl14.1b (66 aa).

An N-terminal signal peptide occupies residues 1–19 (MNVTVMFLVLLLTMPLTDG). Positions 20 to 47 (FNIRAINGGELFGLVQRDAGNALDHGFY) are excised as a propeptide.

Belongs to the conotoxin L superfamily. In terms of processing, contains 2 disulfide bonds. Expressed by the venom duct.

It localises to the secreted. The protein is Conotoxin Cl14.1b of Californiconus californicus (California cone).